Here is a 212-residue protein sequence, read N- to C-terminus: Large ribosomal subunit protein uL3 (212 aa).

An N5-methylglutamine modification is found at Gln-153.

The protein belongs to the universal ribosomal protein uL3 family. In terms of assembly, part of the 50S ribosomal subunit. Forms a cluster with proteins L14 and L19. Methylated by PrmB.

Functionally, one of the primary rRNA binding proteins, it binds directly near the 3'-end of the 23S rRNA, where it nucleates assembly of the 50S subunit. The polypeptide is Large ribosomal subunit protein uL3 (Colwellia psychrerythraea (strain 34H / ATCC BAA-681) (Vibrio psychroerythus)).